A 418-amino-acid polypeptide reads, in one-letter code: IQ domain-containing protein C (418 aa).

The IQ domain maps to 6 to 35; it reads FLRKVSTLQAGFRGFLVRRQFQSLRAEYEA. Disordered stretches follow at residues 101-142, 230-264, 280-299, 327-355, and 376-418; these read QKKT…SVSK, HHAE…KGRE, SQAG…QPFK, AETQ…AGPC, and GSLD…LQWR. Composition is skewed to polar residues over residues 129–142 and 249–259; these read KASQ…SVSK and SVTSAGKTTAG. A coiled-coil region spans residues 141 to 176; sequence SKMENADLGLSQSQQELQEQRNHLAMELLWLQQAIN. Over residues 390-404 the composition is skewed to polar residues; the sequence is PPSAGSSGHGNTSEL.

This Mus musculus (Mouse) protein is IQ domain-containing protein C (Iqcc).